We begin with the raw amino-acid sequence, 424 residues long: UDP-N-acetylglucosamine 1-carboxyvinyltransferase (424 aa).

Residue 22 to 23 (KN) participates in phosphoenolpyruvate binding. Arginine 93 serves as a coordination point for UDP-N-acetyl-alpha-D-glucosamine. Cysteine 117 (proton donor) is an active-site residue. Cysteine 117 is subject to 2-(S-cysteinyl)pyruvic acid O-phosphothioketal. Residues 162 to 165 (KVSV), aspartate 307, and isoleucine 329 each bind UDP-N-acetyl-alpha-D-glucosamine.

Belongs to the EPSP synthase family. MurA subfamily.

Its subcellular location is the cytoplasm. The enzyme catalyses phosphoenolpyruvate + UDP-N-acetyl-alpha-D-glucosamine = UDP-N-acetyl-3-O-(1-carboxyvinyl)-alpha-D-glucosamine + phosphate. It participates in cell wall biogenesis; peptidoglycan biosynthesis. Functionally, cell wall formation. Adds enolpyruvyl to UDP-N-acetylglucosamine. This Glaesserella parasuis serovar 5 (strain SH0165) (Haemophilus parasuis) protein is UDP-N-acetylglucosamine 1-carboxyvinyltransferase.